The primary structure comprises 75 residues: Alpha-elapitoxin-Bc2c (75 aa).

The first 2 residues, 1 to 2, serve as a signal peptide directing secretion; the sequence is YT. Cystine bridges form between Cys-5-Cys-24, Cys-17-Cys-45, Cys-30-Cys-34, Cys-49-Cys-60, and Cys-61-Cys-66.

This sequence belongs to the three-finger toxin family. Long-chain subfamily. Type II alpha-neurotoxin sub-subfamily. Monomer in solution, homodimer in crystal state. As to expression, expressed by the venom gland.

Its subcellular location is the secreted. In terms of biological role, binds to muscular and neuronal nicotinic acetylcholine receptor (nAChR) and inhibits acetylcholine from binding to the receptor, thereby impairing neuromuscular and neuronal transmission. Blocks muscle type nAChR. Also binds with high affinity to alpha-7/CHRNA7 nAChRs. In addition, shows a weak inhibition of neuronal alpha-3-beta-2/CHRNA3-CHRNB2 nAChR. Selectively binds to alpha-1-delta subunit interface of the mouse muscle nicotinic acetylcholine receptor, with a 10-fold higher affinity for the adult than for the fetal receptors. In vivo, when intraperitoneally injected into mice, causes flaccid paralysis and respiratory distress, followed by death within 2-4 hours. This is Alpha-elapitoxin-Bc2c from Bungarus candidus (Malayan krait).